Consider the following 205-residue polypeptide: Methylthioribulose-1-phosphate dehydratase (205 aa).

Residues His94 and His96 each contribute to the Zn(2+) site.

It belongs to the aldolase class II family. MtnB subfamily. Zn(2+) serves as cofactor.

It carries out the reaction 5-(methylsulfanyl)-D-ribulose 1-phosphate = 5-methylsulfanyl-2,3-dioxopentyl phosphate + H2O. It functions in the pathway amino-acid biosynthesis; L-methionine biosynthesis via salvage pathway; L-methionine from S-methyl-5-thio-alpha-D-ribose 1-phosphate: step 2/6. Catalyzes the dehydration of methylthioribulose-1-phosphate (MTRu-1-P) into 2,3-diketo-5-methylthiopentyl-1-phosphate (DK-MTP-1-P). The polypeptide is Methylthioribulose-1-phosphate dehydratase (Pectobacterium carotovorum subsp. carotovorum (strain PC1)).